Consider the following 509-residue polypeptide: tRNA-2-methylthio-N(6)-dimethylallyladenosine synthase (509 aa).

Over residues 1–15 (MNEQQRLASQQVNSS) the composition is skewed to polar residues. The tract at residues 1 to 26 (MNEQQRLASQQVNSSTKKEEKDYSKY) is disordered. Positions 16 to 25 (TKKEEKDYSK) are enriched in basic and acidic residues. Residues 66-184 (RKFYIRTYGC…LPYILKDAMF (119 aa)) enclose the MTTase N-terminal domain. [4Fe-4S] cluster contacts are provided by Cys-75, Cys-111, Cys-145, Cys-221, Cys-225, and Cys-228. The Radical SAM core domain maps to 207–437 (RRGDIKAWVN…NALVNKLAIE (231 aa)). Residues 440-503 (NRYKGQIVEV…TWSLNGELVE (64 aa)) enclose the TRAM domain.

This sequence belongs to the methylthiotransferase family. MiaB subfamily. As to quaternary structure, monomer. It depends on [4Fe-4S] cluster as a cofactor.

It localises to the cytoplasm. The catalysed reaction is N(6)-dimethylallyladenosine(37) in tRNA + (sulfur carrier)-SH + AH2 + 2 S-adenosyl-L-methionine = 2-methylsulfanyl-N(6)-dimethylallyladenosine(37) in tRNA + (sulfur carrier)-H + 5'-deoxyadenosine + L-methionine + A + S-adenosyl-L-homocysteine + 2 H(+). Its function is as follows. Catalyzes the methylthiolation of N6-(dimethylallyl)adenosine (i(6)A), leading to the formation of 2-methylthio-N6-(dimethylallyl)adenosine (ms(2)i(6)A) at position 37 in tRNAs that read codons beginning with uridine. This chain is tRNA-2-methylthio-N(6)-dimethylallyladenosine synthase, found in Bacillus cereus (strain AH187).